The following is an 861-amino-acid chain: Replication factor C subunit 1 (861 aa).

Residues M1–N103 form a disordered region. Over residues R16–S28 the composition is skewed to polar residues. T38 carries the phosphothreonine modification. S40 is subject to Phosphoserine. Phosphothreonine is present on T63. Positions G153–A243 constitute a BRCT domain. Residues T299, C311, G353–T361, and N456 contribute to the ATP site. The tract at residues S788–A861 is disordered. A compositionally biased stretch (acidic residues) spans D803 to Q823. Short sequence motifs (nuclear localization signal) lie at residues K830–L834 and K855–K860. A compositionally biased stretch (basic residues) spans K836–A861.

The protein belongs to the activator 1 large subunit family. In terms of assembly, replication factor C (RFC) is a heteropentamer of subunits RFC1, RFC2, RFC3, RFC4 and RFC5 and forms a complex with POL30/PCNA in the presence of ATP. Interacts with ECO1 and POL30/PCNA.

The protein resides in the nucleus. Functionally, component of the ATP-dependent clamp loader RFC complex for the POL30/PCNA homotrimer DNA clamp. During a clamp loading circle, the RFC:clamp complex binds to DNA and the recognition of the double-stranded/single-stranded junction stimulates ATP hydrolysis by RFC. The complex presumably provides bipartite ATP sites in which one subunit supplies a catalytic site for hydrolysis of ATP bound to the neighboring subunit. Dissociation of RFC from the clamp leaves the clamp encircling DNA. Replication factor C (RFC or activator 1) complex acts during elongation of primed DNA templates by DNA polymerase delta and epsilon. RFC has an essential but redundant activity in sister chromatid cohesion establishment. The chain is Replication factor C subunit 1 (RFC1) from Saccharomyces cerevisiae (strain ATCC 204508 / S288c) (Baker's yeast).